Consider the following 202-residue polypeptide: Small ribosomal subunit protein uS4c (202 aa).

In terms of domain architecture, S4 RNA-binding spans Met-90–Ile-153.

This sequence belongs to the universal ribosomal protein uS4 family. As to quaternary structure, part of the 30S ribosomal subunit. Contacts protein S5. The interaction surface between S4 and S5 is involved in control of translational fidelity.

Its subcellular location is the plastid. The protein localises to the chloroplast. Its function is as follows. One of the primary rRNA binding proteins, it binds directly to 16S rRNA where it nucleates assembly of the body of the 30S subunit. With S5 and S12 plays an important role in translational accuracy. This Arbusculohypopterygium arbuscula (Moss) protein is Small ribosomal subunit protein uS4c (rps4).